We begin with the raw amino-acid sequence, 200 residues long: UPF0316 protein Mhun_0543 (200 aa).

The next 3 helical transmembrane spans lie at 3–23 (VGFLSSDLFTFGLIPVLIFLA), 44–64 (FIAPVFGFFEVTIWLLAIGQV), and 71–91 (PICYIAYGAGFAAGTYIGMEL).

Belongs to the UPF0316 family.

The protein localises to the cell membrane. The sequence is that of UPF0316 protein Mhun_0543 from Methanospirillum hungatei JF-1 (strain ATCC 27890 / DSM 864 / NBRC 100397 / JF-1).